Reading from the N-terminus, the 94-residue chain is Immune protein Tsi6 (94 aa).

Its function is as follows. Immunity protein that plays a role in preventing early activation of toxin Tse6. This is Immune protein Tsi6 from Pseudomonas aeruginosa (strain ATCC 15692 / DSM 22644 / CIP 104116 / JCM 14847 / LMG 12228 / 1C / PRS 101 / PAO1).